We begin with the raw amino-acid sequence, 336 residues long: MNLNKMLSNQFDSVVLNVKKTSELVDCSGASVFIIHNNNIVTEEYWGRHSQANNARSIQEDTQFHVASVRKSYIGYAVAYAVQQGLISTDDPITKYLSINSPILQKTTIRHLLTHTHGLKMVNGKLQQEFTSGESWAYRGIGIELLTQIVKITTGQSVAEIVDQVFKSLEFKETGWYGELNEKLVEVIRKPGDPNWYTSKSTDGDKMNMYVSTRELAKWGYFHLKEGLINGKQIVPSEIFKLVTSIQSPNTINEEHPTNGFLWFVQDLPTRRSEIGEYLPKGSFQILGYTGVTLLIVPQHNLVAVRAFNSFGSPEGFNYLADVRKFGDTIMTCLLS.

This is an uncharacterized protein from Alkalihalophilus pseudofirmus (strain ATCC BAA-2126 / JCM 17055 / OF4) (Bacillus pseudofirmus).